The chain runs to 542 residues: Mitochondrial distribution and morphology protein 34 (542 aa).

One can recognise an SMP-LTD domain in the interval 1–216 (MSFRFNKGAF…LPSVIFSMSQ (216 aa)). 2 disordered regions span residues 27 to 58 (LNSK…TRGP) and 372 to 435 (SSGD…TTAV). Residues 31–48 (TQSSSQTAPANTTNSAAT) are compositionally biased toward low complexity. Over residues 49–58 (DEVKQETRGP) the composition is skewed to basic and acidic residues. Residues 379–394 (IRRRKIKMGKKSKSKK) are compositionally biased toward basic residues. Low complexity predominate over residues 403-414 (SSPTVVMPSSPS).

Belongs to the MDM34 family. Component of the ER-mitochondria encounter structure (ERMES) or MDM complex, composed of MMM1, MDM10, MDM12 and MDM34.

Its subcellular location is the mitochondrion outer membrane. Functionally, component of the ERMES/MDM complex, which serves as a molecular tether to connect the endoplasmic reticulum (ER) and mitochondria. Components of this complex are involved in the control of mitochondrial shape and protein biogenesis, and function in nonvesicular lipid trafficking between the ER and mitochondria. MDM34 is required for the interaction of the ER-resident membrane protein MMM1 and the outer mitochondrial membrane-resident beta-barrel protein MDM10. The chain is Mitochondrial distribution and morphology protein 34 from Lachancea thermotolerans (strain ATCC 56472 / CBS 6340 / NRRL Y-8284) (Yeast).